Reading from the N-terminus, the 84-residue chain is Large ribosomal subunit protein bL27 (84 aa).

Belongs to the bacterial ribosomal protein bL27 family.

The chain is Large ribosomal subunit protein bL27 from Karelsulcia muelleri (strain GWSS) (Sulcia muelleri).